We begin with the raw amino-acid sequence, 329 residues long: 4-hydroxythreonine-4-phosphate dehydrogenase (329 aa).

His136 and Thr137 together coordinate substrate. His166, His211, and His266 together coordinate a divalent metal cation. Substrate-binding residues include Lys274, Asn283, and Arg292.

Belongs to the PdxA family. In terms of assembly, homodimer. The cofactor is Zn(2+). Requires Mg(2+) as cofactor. It depends on Co(2+) as a cofactor.

The protein resides in the cytoplasm. The catalysed reaction is 4-(phosphooxy)-L-threonine + NAD(+) = 3-amino-2-oxopropyl phosphate + CO2 + NADH. Its pathway is cofactor biosynthesis; pyridoxine 5'-phosphate biosynthesis; pyridoxine 5'-phosphate from D-erythrose 4-phosphate: step 4/5. Functionally, catalyzes the NAD(P)-dependent oxidation of 4-(phosphooxy)-L-threonine (HTP) into 2-amino-3-oxo-4-(phosphooxy)butyric acid which spontaneously decarboxylates to form 3-amino-2-oxopropyl phosphate (AHAP). The chain is 4-hydroxythreonine-4-phosphate dehydrogenase from Shigella sonnei (strain Ss046).